The chain runs to 84 residues: Small ribosomal subunit protein bS16 (84 aa).

This sequence belongs to the bacterial ribosomal protein bS16 family.

This chain is Small ribosomal subunit protein bS16, found in Cupriavidus necator (strain ATCC 17699 / DSM 428 / KCTC 22496 / NCIMB 10442 / H16 / Stanier 337) (Ralstonia eutropha).